The sequence spans 467 residues: Glutamyl-tRNA(Gln) amidotransferase subunit A (467 aa).

Residues Lys-57 and Ser-132 each act as charge relay system in the active site. Ser-156 functions as the Acyl-ester intermediate in the catalytic mechanism.

The protein belongs to the amidase family. GatA subfamily. In terms of assembly, heterotrimer of A, B and C subunits.

The enzyme catalyses L-glutamyl-tRNA(Gln) + L-glutamine + ATP + H2O = L-glutaminyl-tRNA(Gln) + L-glutamate + ADP + phosphate + H(+). Its function is as follows. Allows the formation of correctly charged Gln-tRNA(Gln) through the transamidation of misacylated Glu-tRNA(Gln) in organisms which lack glutaminyl-tRNA synthetase. The reaction takes place in the presence of glutamine and ATP through an activated gamma-phospho-Glu-tRNA(Gln). This chain is Glutamyl-tRNA(Gln) amidotransferase subunit A, found in Pseudothermotoga lettingae (strain ATCC BAA-301 / DSM 14385 / NBRC 107922 / TMO) (Thermotoga lettingae).